Reading from the N-terminus, the 283-residue chain is Stage II sporulation protein Q (283 aa).

Residues 22-42 traverse the membrane as a helical segment; the sequence is WVFPAIYLVSAAVILTAVLWY. The disordered stretch occupies residues 228–283; it reads EKAATQETEESIQQSSEKKDGSTEKGTEEKSGEKKDDSTDKSGSKESSTTEDTEQS. Positions 243 to 271 are enriched in basic and acidic residues; the sequence is SEKKDGSTEKGTEEKSGEKKDDSTDKSGS.

As to quaternary structure, interacts with SpoIIIAH and SpoIIE.

Its subcellular location is the forespore membrane. Involved in forespore engulfment and required for anchoring membrane proteins on the forespore side of the septal membrane. Forms a channel with SpoIIIAH that is open on the forespore end and closed (or gated) on the mother cell end. This allows sigma-E-directed gene expression in the mother-cell compartment of the sporangium to trigger the activation of sigma-G forespore-specific gene expression by a pathway of intercellular signaling. The sequence is that of Stage II sporulation protein Q (spoIIQ) from Bacillus subtilis (strain 168).